Here is a 416-residue protein sequence, read N- to C-terminus: MSIEIPAGLTELLQGFTVEVLRHQPADLLEFALQHFTRLQQENERKGAARFGHEGRTWGDAGAAAGGGTPSKGVNFAEEPMRSDSENGEEEEAAEAGAFNAPVINRFTRRASVCAEAYNPDEEEDDAESRIIHPKTDDQRNRLQEACKDILLFKNLDPEQMSQVLDAMFEKLVKEGEHVIDQGDDGDNFYVIDRGTFDIYVKCDGVGRCVGNYDNRGSFGELALMYNTPRAATITATSPGALWGLDRVTFRRIIVKNNAKKRKMYESFIESLPFLKSLEVSERLKVVDVIGTKVYNDGEQIIAQGDSADSFFIVESGEVRITMKRKGKSDIEENGAVEIARCLRGQYFGELALVTNKPRAASAHAIGTVKCLAMDVQAFERLLGPCMEIMKRNIATYEEQLVALFGTNMDIVEPTA.

Residues 2-151 form a dimerization and phosphorylation region; the sequence is SIEIPAGLTE…RLQEACKDIL (150 aa). Residues 53 to 97 form a disordered region; that stretch reads HEGRTWGDAGAAAGGGTPSKGVNFAEEPMRSDSENGEEEEAAEAG. Threonine 69 carries the post-translational modification Phosphothreonine. 3 positions are modified to phosphoserine: serine 83, serine 85, and serine 112. 3',5'-cyclic AMP is bound by residues 152–273, glutamate 221, arginine 230, 274–416, glutamate 350, and arginine 359; these read LFKN…ESLP and FLKS…EPTA.

It belongs to the cAMP-dependent kinase regulatory chain family. As to quaternary structure, the inactive form of the enzyme is composed of two regulatory chains and two catalytic chains. Activation by cAMP produces two active catalytic monomers and a regulatory dimer that binds four cAMP molecules. Interacts with PRKACA and PRKACB. Interacts with the phosphorylated form of PJA2. Forms a complex composed of PRKAR2B, GSK3B and GSKIP through GSKIP interaction; facilitates PKA-induced phosphorylation and regulates GSK3B activity. In terms of processing, phosphorylated by the activated catalytic chain. As to expression, four types of regulatory chains are found: I-alpha, I-beta, II-alpha, and II-beta. Their expression varies among tissues and is in some cases constitutive and in others inducible. Brain. Present in a few pyramidal neurons and mostly in mossy fibers. Colocalizes with PJA2 in dentate granule cells and at postsynaptic sites of primary hippocampal neurons.

The protein resides in the cytoplasm. It localises to the cell membrane. Functionally, regulatory subunit of the cAMP-dependent protein kinases involved in cAMP signaling in cells. Type II regulatory chains mediate membrane association by binding to anchoring proteins, including the MAP2 kinase. This chain is cAMP-dependent protein kinase type II-beta regulatory subunit (Prkar2b), found in Rattus norvegicus (Rat).